A 480-amino-acid polypeptide reads, in one-letter code: Protein U54 (480 aa).

The chain is Protein U54 from Elephas maximus (Indian elephant).